A 112-amino-acid polypeptide reads, in one-letter code: Mitochondrial import inner membrane translocase subunit TIM14-2 (112 aa).

The chain crosses the membrane as a helical span at residues 7–25 (AGAAVAAAAYAGKYGIEAW). The region spanning 53–112 (EAALILGVRESVAAEKVKEAHRRVMVANHPDAGGSHYLASKINEAKDMMLGKTKNSGSAF) is the J domain.

This sequence belongs to the TIM14 family. In terms of assembly, probable component of the PAM complex at least composed of a mitochondrial HSP70 protein, TIMM44 and TIMM14. The complex interacts with the TIMM23 component of the TIM17:23 complex.

The protein resides in the mitochondrion. Its subcellular location is the mitochondrion inner membrane. In terms of biological role, component of the PAM complex, a complex required for the translocation of transit peptide-containing proteins from the inner membrane into the mitochondrial matrix in an ATP-dependent manner. The chain is Mitochondrial import inner membrane translocase subunit TIM14-2 (TIM14-2) from Arabidopsis thaliana (Mouse-ear cress).